The chain runs to 204 residues: Thiamine-phosphate synthase (204 aa).

4-amino-2-methyl-5-(diphosphooxymethyl)pyrimidine-binding positions include 35 to 39 (QVREK) and N67. Mg(2+) contacts are provided by D68 and D87. S106 is a 4-amino-2-methyl-5-(diphosphooxymethyl)pyrimidine binding site. 2-[(2R,5Z)-2-carboxy-4-methylthiazol-5(2H)-ylidene]ethyl phosphate is bound at residue 132–134 (TPT). A 4-amino-2-methyl-5-(diphosphooxymethyl)pyrimidine-binding site is contributed by K135. 2-[(2R,5Z)-2-carboxy-4-methylthiazol-5(2H)-ylidene]ethyl phosphate contacts are provided by residues G163 and 183-184 (VS).

The protein belongs to the thiamine-phosphate synthase family. The cofactor is Mg(2+).

It carries out the reaction 2-[(2R,5Z)-2-carboxy-4-methylthiazol-5(2H)-ylidene]ethyl phosphate + 4-amino-2-methyl-5-(diphosphooxymethyl)pyrimidine + 2 H(+) = thiamine phosphate + CO2 + diphosphate. The catalysed reaction is 2-(2-carboxy-4-methylthiazol-5-yl)ethyl phosphate + 4-amino-2-methyl-5-(diphosphooxymethyl)pyrimidine + 2 H(+) = thiamine phosphate + CO2 + diphosphate. It catalyses the reaction 4-methyl-5-(2-phosphooxyethyl)-thiazole + 4-amino-2-methyl-5-(diphosphooxymethyl)pyrimidine + H(+) = thiamine phosphate + diphosphate. It functions in the pathway cofactor biosynthesis; thiamine diphosphate biosynthesis; thiamine phosphate from 4-amino-2-methyl-5-diphosphomethylpyrimidine and 4-methyl-5-(2-phosphoethyl)-thiazole: step 1/1. In terms of biological role, condenses 4-methyl-5-(beta-hydroxyethyl)thiazole monophosphate (THZ-P) and 2-methyl-4-amino-5-hydroxymethyl pyrimidine pyrophosphate (HMP-PP) to form thiamine monophosphate (TMP). The sequence is that of Thiamine-phosphate synthase from Vibrio parahaemolyticus serotype O3:K6 (strain RIMD 2210633).